The primary structure comprises 284 residues: Polyamine aminopropyltransferase (284 aa).

Residues 2 to 237 enclose the PABS domain; the sequence is ELWYTEKHTE…GHWLFGFASK (236 aa). Q31 provides a ligand contact to S-methyl-5'-thioadenosine. Spermidine-binding residues include H62 and D86. S-methyl-5'-thioadenosine is bound by residues E106 and 137–138; that span reads DG. The active-site Proton acceptor is D155. 155–158 serves as a coordination point for spermidine; the sequence is DSTD. Residue P162 coordinates S-methyl-5'-thioadenosine.

The protein belongs to the spermidine/spermine synthase family. As to quaternary structure, homodimer or homotetramer.

It is found in the cytoplasm. The enzyme catalyses S-adenosyl 3-(methylsulfanyl)propylamine + putrescine = S-methyl-5'-thioadenosine + spermidine + H(+). Its pathway is amine and polyamine biosynthesis; spermidine biosynthesis; spermidine from putrescine: step 1/1. Functionally, catalyzes the irreversible transfer of a propylamine group from the amino donor S-adenosylmethioninamine (decarboxy-AdoMet) to putrescine (1,4-diaminobutane) to yield spermidine. This is Polyamine aminopropyltransferase from Clostridium botulinum (strain Alaska E43 / Type E3).